A 153-amino-acid polypeptide reads, in one-letter code: Riboflavin synthase (153 aa).

The protein belongs to the DMRL synthase family. Homooligomer. The cofactor is Mg(2+).

The catalysed reaction is 2 6,7-dimethyl-8-(1-D-ribityl)lumazine + H(+) = 5-amino-6-(D-ribitylamino)uracil + riboflavin. The protein operates within cofactor biosynthesis; riboflavin biosynthesis; riboflavin from 2-hydroxy-3-oxobutyl phosphate and 5-amino-6-(D-ribitylamino)uracil: step 2/2. Its activity is regulated as follows. Inhibited by EDTA. This is Riboflavin synthase (ribC) from Methanothermobacter thermautotrophicus (strain ATCC 29096 / DSM 1053 / JCM 10044 / NBRC 100330 / Delta H) (Methanobacterium thermoautotrophicum).